The chain runs to 722 residues: A-type ATP synthase subunit I (722 aa).

The segment covering 309 to 321 (DYKPTGHDQHVPA) has biased composition (basic and acidic residues). The tract at residues 309–352 (DYKPTGHDQHVPADDGADAATDGGTTASFDETDSPPVIQDNPGP) is disordered. Positions 326 to 335 (DAATDGGTTA) are enriched in low complexity. Transmembrane regions (helical) follow at residues 384–404 (FYGF…LGFW), 419–439 (GVAM…GEVF), 474–494 (LAAS…FGFV), 505–525 (AALE…WLFS), 554–574 (LAAA…AGFL), 590–610 (IAAV…LVFG), 639–659 (FMLF…MHMG), and 662–682 (GILI…ALGV).

Belongs to the V-ATPase 116 kDa subunit family. In terms of assembly, has multiple subunits with at least A(3), B(3), C, D, E, F, H, I and proteolipid K(x).

It localises to the cell membrane. Its function is as follows. Component of the A-type ATP synthase that produces ATP from ADP in the presence of a proton gradient across the membrane. The sequence is that of A-type ATP synthase subunit I from Halobacterium salinarum (strain ATCC 700922 / JCM 11081 / NRC-1) (Halobacterium halobium).